A 304-amino-acid chain; its full sequence is Release factor glutamine methyltransferase (304 aa).

2 residues coordinate S-adenosyl-L-methionine: D144 and N188. Position 188–191 (188–191) interacts with substrate; that stretch reads NPPY.

The protein belongs to the protein N5-glutamine methyltransferase family. PrmC subfamily.

It catalyses the reaction L-glutaminyl-[peptide chain release factor] + S-adenosyl-L-methionine = N(5)-methyl-L-glutaminyl-[peptide chain release factor] + S-adenosyl-L-homocysteine + H(+). Functionally, methylates the class 1 translation termination release factors RF1/PrfA and RF2/PrfB on the glutamine residue of the universally conserved GGQ motif. The chain is Release factor glutamine methyltransferase from Mycobacterium tuberculosis (strain CDC 1551 / Oshkosh).